Here is a 693-residue protein sequence, read N- to C-terminus: MALTRQELELIRRGLGREPTAAELAFFTSHWSEHCSYKSTRRWLRELPGSAPWVVRGRGTDAPLVEVAPGLYVSFKIESHNHPSAVDPYNGAATGVGGIIRDILTVGATPVALLVNLHFGPPEDPHARWIFSNVVKGISDYGNRVGVPVVGGETWFDEDFTYTPIVLATCVGVVEAEAVPRGGVAPGDYLVVAGLGADRSGLGGSAFASKTLEGGEDLGAVQVADPLMGKKLIDVVREAGRCVKFIKDLGGGGLATALAELSSWFSLGIEFHLDKLHVRDRAAAPEELLISETQERLIFVVSPQDLPCLEAALRRYEVPYSIPGRFVEGGRVWVMWRGERVVDIPISLADGAPEVLWPQEPYQPPELPQLPEPPLEKALDLVLSSPNVAKKESIYMRFDFDVGVKTAVKPGEGDAAVLKLYQRGQLGLVVKGDANPRYTFLDPRLGAANAFVKAYRNVAVVGGVPLAAVDSINVGSPERPRVYWQFVQAVQGLREAAAELEVPIVGGKVSLYNEYMGRPVKPTVAVVVLGRIDDVSKANRAMWREGDRIFVWGVTRGEVGGSEYLKRVHGVVAGRPPAVDYGAERKIVDVVQSWLGRLTGATDVGVGGLAAALAKMAVNSGVGATVDVCRAPSDVGRLDFLLFSESNGRFVAAGEEGPGVAVGEAHGDVFEVRCGGTLLYKRRVEELRRLMLL.

His34 is an active-site residue. ATP is bound by residues Tyr37 and Lys76. Glu78 contributes to the Mg(2+) binding site. Substrate contacts are provided by residues 79 to 82 (SHNH) and Arg101. Catalysis depends on His80, which acts as the Proton acceptor. Residue Asp102 coordinates Mg(2+). Gln222 contributes to the substrate binding site. Asp248 contacts Mg(2+). 292-294 (ETQ) contributes to the substrate binding site. ATP-binding residues include Asp470 and Gly507. Residue Ser510 participates in substrate binding.

This sequence belongs to the FGAMS family. As to quaternary structure, monomer. Part of the FGAM synthase complex composed of 1 PurL, 1 PurQ and 2 PurS subunits.

The protein localises to the cytoplasm. The enzyme catalyses N(2)-formyl-N(1)-(5-phospho-beta-D-ribosyl)glycinamide + L-glutamine + ATP + H2O = 2-formamido-N(1)-(5-O-phospho-beta-D-ribosyl)acetamidine + L-glutamate + ADP + phosphate + H(+). Its pathway is purine metabolism; IMP biosynthesis via de novo pathway; 5-amino-1-(5-phospho-D-ribosyl)imidazole from N(2)-formyl-N(1)-(5-phospho-D-ribosyl)glycinamide: step 1/2. Functionally, part of the phosphoribosylformylglycinamidine synthase complex involved in the purines biosynthetic pathway. Catalyzes the ATP-dependent conversion of formylglycinamide ribonucleotide (FGAR) and glutamine to yield formylglycinamidine ribonucleotide (FGAM) and glutamate. The FGAM synthase complex is composed of three subunits. PurQ produces an ammonia molecule by converting glutamine to glutamate. PurL transfers the ammonia molecule to FGAR to form FGAM in an ATP-dependent manner. PurS interacts with PurQ and PurL and is thought to assist in the transfer of the ammonia molecule from PurQ to PurL. This is Phosphoribosylformylglycinamidine synthase subunit PurL from Pyrobaculum neutrophilum (strain DSM 2338 / JCM 9278 / NBRC 100436 / V24Sta) (Thermoproteus neutrophilus).